The following is a 353-amino-acid chain: DNA polymerase IV (353 aa).

In terms of domain architecture, UmuC spans 6–187 (IIHVDCDCFY…LPVSKLHGVG (182 aa)). Residues D10 and D105 each coordinate Mg(2+). The active site involves E106.

The protein belongs to the DNA polymerase type-Y family. As to quaternary structure, monomer. Mg(2+) is required as a cofactor.

The protein resides in the cytoplasm. It catalyses the reaction DNA(n) + a 2'-deoxyribonucleoside 5'-triphosphate = DNA(n+1) + diphosphate. Its function is as follows. Poorly processive, error-prone DNA polymerase involved in untargeted mutagenesis. Copies undamaged DNA at stalled replication forks, which arise in vivo from mismatched or misaligned primer ends. These misaligned primers can be extended by PolIV. Exhibits no 3'-5' exonuclease (proofreading) activity. May be involved in translesional synthesis, in conjunction with the beta clamp from PolIII. This is DNA polymerase IV from Pseudomonas fluorescens (strain Pf0-1).